A 475-amino-acid polypeptide reads, in one-letter code: Glutamate--tRNA ligase 1 (475 aa).

The short motif at 11 to 21 (PSPTGYLHIGG) is the 'HIGH' region element. A 'KMSKS' region motif is present at residues 240-244 (KLSKR). Lys-243 contributes to the ATP binding site.

Belongs to the class-I aminoacyl-tRNA synthetase family. Glutamate--tRNA ligase type 1 subfamily. In terms of assembly, monomer.

The protein localises to the cytoplasm. It carries out the reaction tRNA(Glu) + L-glutamate + ATP = L-glutamyl-tRNA(Glu) + AMP + diphosphate. Functionally, catalyzes the attachment of glutamate to tRNA(Glu) in a two-step reaction: glutamate is first activated by ATP to form Glu-AMP and then transferred to the acceptor end of tRNA(Glu). The chain is Glutamate--tRNA ligase 1 from Methylobacterium radiotolerans (strain ATCC 27329 / DSM 1819 / JCM 2831 / NBRC 15690 / NCIMB 10815 / 0-1).